Here is a 163-residue protein sequence, read N- to C-terminus: 2-C-methyl-D-erythritol 2,4-cyclodiphosphate synthase (163 aa).

The a divalent metal cation site is built by Asp12 and His14. 4-CDP-2-C-methyl-D-erythritol 2-phosphate is bound by residues Asp12–His14 and His38–Ser39. His46 is an a divalent metal cation binding site. Residues Asp60–Gly62, Phe65–Asp69, Thr136–Glu139, Phe143, and Arg146 contribute to the 4-CDP-2-C-methyl-D-erythritol 2-phosphate site.

Belongs to the IspF family. Homotrimer. The cofactor is a divalent metal cation.

The catalysed reaction is 4-CDP-2-C-methyl-D-erythritol 2-phosphate = 2-C-methyl-D-erythritol 2,4-cyclic diphosphate + CMP. It participates in isoprenoid biosynthesis; isopentenyl diphosphate biosynthesis via DXP pathway; isopentenyl diphosphate from 1-deoxy-D-xylulose 5-phosphate: step 4/6. Its function is as follows. Involved in the biosynthesis of isopentenyl diphosphate (IPP) and dimethylallyl diphosphate (DMAPP), two major building blocks of isoprenoid compounds. Catalyzes the conversion of 4-diphosphocytidyl-2-C-methyl-D-erythritol 2-phosphate (CDP-ME2P) to 2-C-methyl-D-erythritol 2,4-cyclodiphosphate (ME-CPP) with a corresponding release of cytidine 5-monophosphate (CMP). The chain is 2-C-methyl-D-erythritol 2,4-cyclodiphosphate synthase from Acinetobacter baylyi (strain ATCC 33305 / BD413 / ADP1).